The sequence spans 149 residues: Large ribosomal subunit protein bL9 (149 aa).

Belongs to the bacterial ribosomal protein bL9 family.

Its function is as follows. Binds to the 23S rRNA. The protein is Large ribosomal subunit protein bL9 of Alkaliphilus metalliredigens (strain QYMF).